The sequence spans 545 residues: CTP synthase (545 aa).

The amidoligase domain stretch occupies residues 1 to 266; sequence MATNYIFVTG…DDFVCERFRL (266 aa). Ser-14 contributes to the CTP binding site. Ser-14 contributes to the UTP binding site. ATP contacts are provided by residues 15–20 and Asp-72; that span reads SLGKGI. Mg(2+)-binding residues include Asp-72 and Glu-140. CTP contacts are provided by residues 147-149, 187-192, and Lys-223; these read DIE and KTKPTQ. UTP is bound by residues 187–192 and Lys-223; that span reads KTKPTQ. 239 to 241 is a binding site for ATP; the sequence is KDV. The region spanning 291-542 is the Glutamine amidotransferase type-1 domain; it reads TIGMVGKYTE…VKAAYENHKK (252 aa). L-glutamine is bound at residue Gly-352. Catalysis depends on Cys-379, which acts as the Nucleophile; for glutamine hydrolysis. L-glutamine contacts are provided by residues 380–383, Glu-403, and Arg-470; that span reads LGMQ. Active-site residues include His-515 and Glu-517.

The protein belongs to the CTP synthase family. Homotetramer.

The enzyme catalyses UTP + L-glutamine + ATP + H2O = CTP + L-glutamate + ADP + phosphate + 2 H(+). It carries out the reaction L-glutamine + H2O = L-glutamate + NH4(+). It catalyses the reaction UTP + NH4(+) + ATP = CTP + ADP + phosphate + 2 H(+). The protein operates within pyrimidine metabolism; CTP biosynthesis via de novo pathway; CTP from UDP: step 2/2. With respect to regulation, allosterically activated by GTP, when glutamine is the substrate; GTP has no effect on the reaction when ammonia is the substrate. The allosteric effector GTP functions by stabilizing the protein conformation that binds the tetrahedral intermediate(s) formed during glutamine hydrolysis. Inhibited by the product CTP, via allosteric rather than competitive inhibition. Catalyzes the ATP-dependent amination of UTP to CTP with either L-glutamine or ammonia as the source of nitrogen. Regulates intracellular CTP levels through interactions with the four ribonucleotide triphosphates. The polypeptide is CTP synthase (Haemophilus influenzae (strain PittEE)).